We begin with the raw amino-acid sequence, 573 residues long: 2-succinyl-5-enolpyruvyl-6-hydroxy-3-cyclohexene-1-carboxylate synthase (573 aa).

This sequence belongs to the TPP enzyme family. MenD subfamily. In terms of assembly, homodimer. Mg(2+) serves as cofactor. The cofactor is Mn(2+). Requires thiamine diphosphate as cofactor.

It catalyses the reaction isochorismate + 2-oxoglutarate + H(+) = 5-enolpyruvoyl-6-hydroxy-2-succinyl-cyclohex-3-ene-1-carboxylate + CO2. It functions in the pathway quinol/quinone metabolism; 1,4-dihydroxy-2-naphthoate biosynthesis; 1,4-dihydroxy-2-naphthoate from chorismate: step 2/7. Its pathway is quinol/quinone metabolism; menaquinone biosynthesis. Its function is as follows. Catalyzes the thiamine diphosphate-dependent decarboxylation of 2-oxoglutarate and the subsequent addition of the resulting succinic semialdehyde-thiamine pyrophosphate anion to isochorismate to yield 2-succinyl-5-enolpyruvyl-6-hydroxy-3-cyclohexene-1-carboxylate (SEPHCHC). This is 2-succinyl-5-enolpyruvyl-6-hydroxy-3-cyclohexene-1-carboxylate synthase from Shewanella sp. (strain MR-4).